The following is a 343-amino-acid chain: Biotin synthase (343 aa).

Positions 36–254 constitute a Radical SAM core domain; sequence NTIQISTLLS…IAVARIMMPK (219 aa). C51, C55, and C58 together coordinate [4Fe-4S] cluster. 4 residues coordinate [2Fe-2S] cluster: C95, C126, C186, and R258.

The protein belongs to the radical SAM superfamily. Biotin synthase family. As to quaternary structure, homodimer. [4Fe-4S] cluster is required as a cofactor. [2Fe-2S] cluster serves as cofactor.

It carries out the reaction (4R,5S)-dethiobiotin + (sulfur carrier)-SH + 2 reduced [2Fe-2S]-[ferredoxin] + 2 S-adenosyl-L-methionine = (sulfur carrier)-H + biotin + 2 5'-deoxyadenosine + 2 L-methionine + 2 oxidized [2Fe-2S]-[ferredoxin]. Its pathway is cofactor biosynthesis; biotin biosynthesis; biotin from 7,8-diaminononanoate: step 2/2. Catalyzes the conversion of dethiobiotin (DTB) to biotin by the insertion of a sulfur atom into dethiobiotin via a radical-based mechanism. The protein is Biotin synthase of Buchnera aphidicola subsp. Acyrthosiphon pisum (strain 5A).